A 147-amino-acid polypeptide reads, in one-letter code: Hemoglobin subunit beta (147 aa).

Val-2 is subject to N-acetylvaline. Positions 3 to 147 (HLSAEEKGLV…VATALAHKYH (145 aa)) constitute a Globin domain. Thr-13 carries the post-translational modification Phosphothreonine. Ser-45 carries the post-translational modification Phosphoserine. Lys-60 bears the N6-acetyllysine mark. His-64 provides a ligand contact to heme b. Lys-83 carries the post-translational modification N6-acetyllysine. A heme b-binding site is contributed by His-93. Cys-94 bears the S-nitrosocysteine mark. Lys-145 is modified (N6-acetyllysine).

Belongs to the globin family. In terms of assembly, heterotetramer of two alpha chains and two beta chains. As to expression, red blood cells.

Functionally, involved in oxygen transport from the lung to the various peripheral tissues. This chain is Hemoglobin subunit beta (HBB), found in Scapanus orarius (Coast mole).